Here is a 926-residue protein sequence, read N- to C-terminus: Serine/threonine-protein kinase SIK2 (926 aa).

Positions 20-271 constitute a Protein kinase domain; the sequence is YDIEGTLGKG…IAQIKEHKWM (252 aa). Threonine 25 bears the Phosphothreonine mark. ATP is bound by residues 26–34 and lysine 49; that span reads LGKGNFAVV. Position 53 is an N6-acetyllysine; by EP300 (lysine 53). Aspartate 142 functions as the Proton acceptor in the catalytic mechanism. Threonine 175 carries the post-translational modification Phosphothreonine; by LKB1. A UBA domain is found at 295–335; sequence EFNEQVLRLMHSLGIDQQKTIESLQNKSYNHFAAIYFLLVE. The residue at position 484 (threonine 484) is a Phosphothreonine. A phosphoserine mark is found at serine 534 and serine 587. Low complexity-rich tracts occupy residues 644–659 and 742–756; these read SSCP…ESVS and SSYP…LPRQ. 3 disordered regions span residues 644 to 666, 742 to 776, and 801 to 896; these read SSCP…ASVH, SSYP…PLSP, and PLPS…SSYD. Over residues 765-774 the composition is skewed to polar residues; it reads APPFSLTQPL. Residues 822 to 834 are compositionally biased toward pro residues; sequence QPPPPPPPPPPRQ.

It belongs to the protein kinase superfamily. CAMK Ser/Thr protein kinase family. SNF1 subfamily. As to quaternary structure, interacts with and phosphorylates TORC2/CRTC2. Requires Mg(2+) as cofactor. In terms of processing, phosphorylated at Thr-175 by STK11/LKB1 in complex with STE20-related adapter-alpha (STRADA) pseudo kinase and CAB39. Phosphorylated at Thr-484 in response to insulin in adipocytes. Acetylation at Lys-53 inhibits kinase activity. Deacetylated by HDAC6.

Its subcellular location is the cytoplasm. The protein resides in the endoplasmic reticulum membrane. It carries out the reaction L-seryl-[protein] + ATP = O-phospho-L-seryl-[protein] + ADP + H(+). The catalysed reaction is L-threonyl-[protein] + ATP = O-phospho-L-threonyl-[protein] + ADP + H(+). With respect to regulation, activated by phosphorylation on Thr-175. In terms of biological role, serine/threonine-protein kinase that plays a role in many biological processes such as fatty acid oxidation, autophagy, immune response or glucose metabolism. Phosphorylates 'Ser-794' of IRS1 in insulin-stimulated adipocytes, potentially modulating the efficiency of insulin signal transduction. Inhibits CREB activity by phosphorylating and repressing TORCs, the CREB-specific coactivators. Phosphorylates EP300 and thus inhibits its histone acetyltransferase activity. In turn, regulates the DNA-binding ability of several transcription factors such as PPARA or MLXIPL. Also plays a role in thymic T-cell development. The polypeptide is Serine/threonine-protein kinase SIK2 (SIK2) (Homo sapiens (Human)).